A 124-amino-acid polypeptide reads, in one-letter code: Large ribosomal subunit protein eL31 (124 aa).

Tyrosine 102 is subject to Phosphotyrosine.

This sequence belongs to the eukaryotic ribosomal protein eL31 family.

The polypeptide is Large ribosomal subunit protein eL31 (RpL31) (Drosophila melanogaster (Fruit fly)).